A 489-amino-acid polypeptide reads, in one-letter code: 3-octaprenyl-4-hydroxybenzoate carboxy-lyase (489 aa).

Asn-172 is a Mn(2+) binding site. Residues 175 to 177, 189 to 191, and 194 to 195 contribute to the prenylated FMN site; these read IYR, RWL, and RG. Glu-238 contributes to the Mn(2+) binding site. The active-site Proton donor is Asp-287.

It belongs to the UbiD family. In terms of assembly, homohexamer. It depends on prenylated FMN as a cofactor. Requires Mn(2+) as cofactor.

It is found in the cell membrane. The catalysed reaction is a 4-hydroxy-3-(all-trans-polyprenyl)benzoate + H(+) = a 2-(all-trans-polyprenyl)phenol + CO2. It functions in the pathway cofactor biosynthesis; ubiquinone biosynthesis. Catalyzes the decarboxylation of 3-octaprenyl-4-hydroxy benzoate to 2-octaprenylphenol, an intermediate step in ubiquinone biosynthesis. The chain is 3-octaprenyl-4-hydroxybenzoate carboxy-lyase from Tolumonas auensis (strain DSM 9187 / NBRC 110442 / TA 4).